The chain runs to 205 residues: Protein TK0174 (205 aa).

Residues 7-201 (EWGEFLVRLA…EEYPRGPVRR (195 aa)) enclose the AMMECR1 domain.

The sequence is that of Protein TK0174 from Thermococcus kodakarensis (strain ATCC BAA-918 / JCM 12380 / KOD1) (Pyrococcus kodakaraensis (strain KOD1)).